Consider the following 154-residue polypeptide: 2S sulfur-rich seed storage protein 2 (154 aa).

Positions 1 to 22 (MAKMSVVAAALLALLVLGQATA) are cleaved as a signal peptide. Residues 29 to 52 (TTLEEEQEENPRGRSEQQCREQME) form a disordered region. Positions 37-52 (ENPRGRSEQQCREQME) are enriched in basic and acidic residues. 4 disulfide bridges follow: cysteine 47-cysteine 101, cysteine 60-cysteine 90, cysteine 91-cysteine 138, and cysteine 103-cysteine 145. Positions 72–76 (PYQNP) are excised as a propeptide. The propeptide occupies 151-154 (TAWL).

The protein belongs to the 2S seed storage albumins family. As to quaternary structure, the mature protein consists of a small and a large chain linked by disulfide bonds.

In terms of biological role, this is a 2S seed storage protein. The protein is 2S sulfur-rich seed storage protein 2 (BE2S2) of Bertholletia excelsa (Brazil nut).